Consider the following 716-residue polypeptide: MSKKRIYEYAKELNVKSKEIIDELKNMNVEVSNHMQALEDDQIKTLDKKFRQQESNNNTKQNTQNNHQKQQNNNNNKNNNKQSNKGNANQKGNNNNKNNAKNNKNNKNNKNNKNNKNNKGNKNNKPAAEPKEMPSKITYEEGITVGELADKLNIESSGIIKKLFLLGIVANINQALDEETLELIADDYGVELEKEVVVNEEDLSIYFDEEEADPDAIERPAVVTIMGHVDHGKTTLLDSIRHTKVTAGEAGGITQHIGAYQIENAGKKITFLDTPGHAAFTTMRARGAQVTDITILVVAADDGVMPQTIEAINHAKEANVPTIVAVNKIDKPTANPDRVMQELTEYGLIPEDWGGETIFVPLSALSGEGIDDLLEMIGLVAEVQELKANPDKQAVGTVIEAELDKSRGPAASLLVQNGTLNVGDSIVVGNTYGRIRAMVNDLGQRIKSAGPSTPVEITGINDVPLAGDRFVIFKDEKQARRIGEARHEASVIQQRQESKNVSLDNLFEQMKQGEMKDLNVIIKGDVQGSVEALAASLMKIDVEGVNVRIIHTAVGAINESDVTLANASNGIIIGFNVRPDAGAKRAAEAENVDMRLHRVIYNVIEEIESAMKGLLDPEFEEQVIGQAEVRQTFKVSKVGTIAGSYVTEGKITRNAGVRIIRDGIVLFEGELDTLKRFKDDAKEVAQGYECGITIEKFNDIKEGDIIEAFEMVEIER.

The interval 52–135 (QQESNNNTKQ…PAAEPKEMPS (84 aa)) is disordered. Residues 56-125 (NNNTKQNTQN…KNNKGNKNNK (70 aa)) are compositionally biased toward low complexity. The tr-type G domain occupies 218–387 (ERPAVVTIMG…GLVAEVQELK (170 aa)). Residues 227-234 (GHVDHGKT) form a G1 region. 227-234 (GHVDHGKT) provides a ligand contact to GTP. The tract at residues 252–256 (GITQH) is G2. The G3 stretch occupies residues 273–276 (DTPG). GTP contacts are provided by residues 273-277 (DTPGH) and 327-330 (NKID). The interval 327–330 (NKID) is G4. The segment at 363-365 (SAL) is G5.

This sequence belongs to the TRAFAC class translation factor GTPase superfamily. Classic translation factor GTPase family. IF-2 subfamily.

It is found in the cytoplasm. Its function is as follows. One of the essential components for the initiation of protein synthesis. Protects formylmethionyl-tRNA from spontaneous hydrolysis and promotes its binding to the 30S ribosomal subunits. Also involved in the hydrolysis of GTP during the formation of the 70S ribosomal complex. The protein is Translation initiation factor IF-2 of Staphylococcus haemolyticus (strain JCSC1435).